A 286-amino-acid chain; its full sequence is 33 kDa chaperonin (286 aa).

Cystine bridges form between Cys236/Cys238 and Cys264/Cys267.

This sequence belongs to the HSP33 family. Under oxidizing conditions two disulfide bonds are formed involving the reactive cysteines. Under reducing conditions zinc is bound to the reactive cysteines and the protein is inactive.

It is found in the cytoplasm. Redox regulated molecular chaperone. Protects both thermally unfolding and oxidatively damaged proteins from irreversible aggregation. Plays an important role in the bacterial defense system toward oxidative stress. The sequence is that of 33 kDa chaperonin from Carboxydothermus hydrogenoformans (strain ATCC BAA-161 / DSM 6008 / Z-2901).